Here is a 184-residue protein sequence, read N- to C-terminus: MEKSTRTLFITIVITSMLLGFGNSDLAQDREECTNQLIELSTCIPYVGGDAKAPTKDCCAGFGQVIRKSEKCVCILVRDKDDPQLGIKINATLAAHLPSACHITAPNITDCISILHLPRNSTLAKEFENLGRIEDNYNSTSPTQIHKDGTGGGKAEPVKSNGWKEKSWLGVELLIYLLVSLIFF.

The first 24 residues, 1–24 (MEKSTRTLFITIVITSMLLGFGNS), serve as a signal peptide directing secretion. Intrachain disulfides connect cysteine 33/cysteine 74, cysteine 43/cysteine 58, cysteine 59/cysteine 101, and cysteine 72/cysteine 111. Positions 138–158 (NSTSPTQIHKDGTGGGKAEPV) are disordered. Serine 160 carries the GPI-anchor amidated serine lipid modification. Residues 161–184 (NGWKEKSWLGVELLIYLLVSLIFF) constitute a propeptide, removed in mature form.

Belongs to the plant LTP family. As to expression, preferentially expressed in the shoot apical meristem and the root meristem. Also present in the ovules and developing embryos. Observed in cotyledons, hypocotyls, flowers, leaves and siliques. Up-regulated in the epidermis of stems.

It is found in the cell membrane. Its function is as follows. Lipid transfer protein involved in seed and ovule maturation and development, probably by regulating the fatty acids homeostasis during suberin and sporopollenin biosynthesis or deposition. Contributes to pre-invasive defense against some non-host powdery mildew pathogens by preventing the penetration of the epidermal cell wall by the fungal agents (e.g. Blumeria graminis f. sp. hordei (Bgh)). The protein is Non-specific lipid transfer protein GPI-anchored 6 of Arabidopsis thaliana (Mouse-ear cress).